The chain runs to 242 residues: Orotidine 5'-phosphate decarboxylase (242 aa).

Residues Asp-16, Lys-37, 64–73 (DLKFHDIPNT), Thr-128, Arg-190, Gln-199, Gly-219, and Arg-220 contribute to the substrate site. The active-site Proton donor is Lys-66.

The protein belongs to the OMP decarboxylase family. Type 1 subfamily. In terms of assembly, homodimer.

The enzyme catalyses orotidine 5'-phosphate + H(+) = UMP + CO2. Its pathway is pyrimidine metabolism; UMP biosynthesis via de novo pathway; UMP from orotate: step 2/2. Catalyzes the decarboxylation of orotidine 5'-monophosphate (OMP) to uridine 5'-monophosphate (UMP). This is Orotidine 5'-phosphate decarboxylase from Prochlorococcus marinus (strain AS9601).